A 1074-amino-acid polypeptide reads, in one-letter code: Chitin synthase 2 (1074 aa).

Disordered stretches follow at residues 1–32 (MSHY…AHSG), 56–179 (QAAP…PSQH), and 209–255 (RSDS…PYNN). Residues 19 to 29 (DQQQPYYTDQA) show a composition bias toward polar residues. Positions 68-80 (RIRSNSSGSRSVS) are enriched in low complexity. N-linked (GlcNAc...) asparagine glycosylation is found at asparagine 72 and asparagine 97. The span at 85-119 (AYTNQGIPPVPSNLSAARQRSDPSQALPPSSSSYA) shows a compositional bias: polar residues. Residues 129–143 (SSHRNAPNAPNSNHP) show a composition bias toward low complexity. Asparagine 149 carries an N-linked (GlcNAc...) asparagine glycan. Asparagine 289 is a glycosylation site (N-linked (GlcNAc...) asparagine). 8 helical membrane passes run 608-628 (VFGF…KALL), 742-762 (LVLL…FYFL), 779-799 (GAAI…VVLV), 817-837 (IIIF…TIYL), 867-887 (IVIS…LHLE), 891-911 (MLTS…ILSM), 1001-1021 (LVLI…STWW), and 1048-1068 (IFWS…TFLL).

This sequence belongs to the chitin synthase family. Class II subfamily.

The protein resides in the cell membrane. It is found in the cytoplasmic vesicle membrane. The enzyme catalyses [(1-&gt;4)-N-acetyl-beta-D-glucosaminyl](n) + UDP-N-acetyl-alpha-D-glucosamine = [(1-&gt;4)-N-acetyl-beta-D-glucosaminyl](n+1) + UDP + H(+). Its function is as follows. Polymerizes chitin, a structural polymer of the cell wall and septum, by transferring the sugar moiety of UDP-GlcNAc to the non-reducing end of the growing chitin polymer. In Mycosarcoma maydis (Corn smut fungus), this protein is Chitin synthase 2 (CHS2).